The primary structure comprises 68 residues: Large ribosomal subunit protein bL35 (68 aa).

It belongs to the bacterial ribosomal protein bL35 family.

The polypeptide is Large ribosomal subunit protein bL35 (Aster yellows witches'-broom phytoplasma (strain AYWB)).